The following is an 83-amino-acid chain: Three-finger toxin MALT0058C (83 aa).

The N-terminal stretch at 1 to 21 (MKTLLLTLVVVTIVCLDFGHT) is a signal peptide. Cystine bridges form between cysteine 24–cysteine 45, cysteine 38–cysteine 62, cysteine 64–cysteine 75, and cysteine 76–cysteine 81.

This sequence belongs to the three-finger toxin family. Short-chain subfamily. Type I alpha-neurotoxin sub-subfamily. Expressed by the venom gland.

The protein resides in the secreted. Functionally, binds to muscle nicotinic acetylcholine receptor (nAChR) and inhibits acetylcholine from binding to the receptor, thereby impairing neuromuscular transmission. The polypeptide is Three-finger toxin MALT0058C (Micrurus altirostris (Uruguayan coral snake)).